The following is a 272-amino-acid chain: GTP cyclohydrolase FolE2 (272 aa).

The protein belongs to the GTP cyclohydrolase IV family.

It carries out the reaction GTP + H2O = 7,8-dihydroneopterin 3'-triphosphate + formate + H(+). Its pathway is cofactor biosynthesis; 7,8-dihydroneopterin triphosphate biosynthesis; 7,8-dihydroneopterin triphosphate from GTP: step 1/1. In terms of biological role, converts GTP to 7,8-dihydroneopterin triphosphate. The protein is GTP cyclohydrolase FolE2 of Aromatoleum aromaticum (strain DSM 19018 / LMG 30748 / EbN1) (Azoarcus sp. (strain EbN1)).